Consider the following 178-residue polypeptide: Translation initiation factor IF-3 (178 aa).

Residues 1–20 (MRRPFRATPVQKDGPRSNRD) are disordered.

Belongs to the IF-3 family. As to quaternary structure, monomer.

The protein localises to the cytoplasm. In terms of biological role, IF-3 binds to the 30S ribosomal subunit and shifts the equilibrium between 70S ribosomes and their 50S and 30S subunits in favor of the free subunits, thus enhancing the availability of 30S subunits on which protein synthesis initiation begins. The protein is Translation initiation factor IF-3 of Brucella anthropi (strain ATCC 49188 / DSM 6882 / CCUG 24695 / JCM 21032 / LMG 3331 / NBRC 15819 / NCTC 12168 / Alc 37) (Ochrobactrum anthropi).